The primary structure comprises 79 residues: RNA-binding protein Hfq (79 aa).

A Sm domain is found at 9–69 (DTFLNHLRKE…ISTFTPQRPV (61 aa)).

It belongs to the Hfq family. As to quaternary structure, homohexamer.

Its function is as follows. RNA chaperone that binds small regulatory RNA (sRNAs) and mRNAs to facilitate mRNA translational regulation in response to envelope stress, environmental stress and changes in metabolite concentrations. Also binds with high specificity to tRNAs. The protein is RNA-binding protein Hfq of Brevibacillus brevis (strain 47 / JCM 6285 / NBRC 100599).